The chain runs to 440 residues: Asparagine--tRNA ligase (440 aa).

The protein belongs to the class-II aminoacyl-tRNA synthetase family. As to quaternary structure, homodimer.

The protein resides in the cytoplasm. It catalyses the reaction tRNA(Asn) + L-asparagine + ATP = L-asparaginyl-tRNA(Asn) + AMP + diphosphate + H(+). The chain is Asparagine--tRNA ligase from Roseiflexus sp. (strain RS-1).